The chain runs to 238 residues: Probable septum site-determining protein MinC (238 aa).

It belongs to the MinC family. As to quaternary structure, interacts with MinD and FtsZ.

Functionally, cell division inhibitor that blocks the formation of polar Z ring septums. Rapidly oscillates between the poles of the cell to destabilize FtsZ filaments that have formed before they mature into polar Z rings. Prevents FtsZ polymerization. The chain is Probable septum site-determining protein MinC from Xylella fastidiosa (strain M23).